A 132-amino-acid chain; its full sequence is Small ribosomal subunit protein uS8 (132 aa).

The protein belongs to the universal ribosomal protein uS8 family. As to quaternary structure, part of the 30S ribosomal subunit. Contacts proteins S5 and S12.

In terms of biological role, one of the primary rRNA binding proteins, it binds directly to 16S rRNA central domain where it helps coordinate assembly of the platform of the 30S subunit. This chain is Small ribosomal subunit protein uS8, found in Corynebacterium glutamicum (strain R).